Here is a 484-residue protein sequence, read N- to C-terminus: UDP-N-acetylmuramate--L-alanine ligase (484 aa).

122-128 (GTHGKTT) provides a ligand contact to ATP.

The protein belongs to the MurCDEF family.

It localises to the cytoplasm. It catalyses the reaction UDP-N-acetyl-alpha-D-muramate + L-alanine + ATP = UDP-N-acetyl-alpha-D-muramoyl-L-alanine + ADP + phosphate + H(+). It participates in cell wall biogenesis; peptidoglycan biosynthesis. In terms of biological role, cell wall formation. The protein is UDP-N-acetylmuramate--L-alanine ligase of Mycobacterium sp. (strain JLS).